The primary structure comprises 132 residues: Small ribosomal subunit protein uS8c (132 aa).

Belongs to the universal ribosomal protein uS8 family. As to quaternary structure, part of the 30S ribosomal subunit.

The protein localises to the plastid. It localises to the chloroplast. Its function is as follows. One of the primary rRNA binding proteins, it binds directly to 16S rRNA central domain where it helps coordinate assembly of the platform of the 30S subunit. The chain is Small ribosomal subunit protein uS8c (rps8) from Cycas taitungensis (Prince sago).